Consider the following 210-residue polypeptide: LexA repressor (210 aa).

Residues 30–50 (RVEIAREIGFKSPNAAEEHLK) constitute a DNA-binding region (H-T-H motif). Residues Ser127 and Lys164 each act as for autocatalytic cleavage activity in the active site.

Belongs to the peptidase S24 family. In terms of assembly, homodimer.

It catalyses the reaction Hydrolysis of Ala-|-Gly bond in repressor LexA.. Its function is as follows. Represses a number of genes involved in the response to DNA damage (SOS response), including recA and lexA. In the presence of single-stranded DNA, RecA interacts with LexA causing an autocatalytic cleavage which disrupts the DNA-binding part of LexA, leading to derepression of the SOS regulon and eventually DNA repair. In Actinobacillus pleuropneumoniae serotype 7 (strain AP76), this protein is LexA repressor.